A 751-amino-acid polypeptide reads, in one-letter code: 1,3-beta-galactosyl-N-acetylhexosamine phosphorylase (751 aa).

The active-site Proton donor is Asp313.

Belongs to the glycoside hydrolase 112 family. Homodimer.

It catalyses the reaction beta-D-galactosyl-(1-&gt;3)-N-acetyl-D-glucosamine + phosphate = alpha-D-galactose 1-phosphate + N-acetyl-D-glucosamine. In terms of biological role, reversibly phosphorolyzes lacto-N-biose to Gal1-P and N-acetylglucosamine (GlcNAc) and galacto-N-biose to Gal1-P and N-acetylgalactosamine (GalNAc). Involved in the lacto-N-biose I/galacto-N-biose (LNB/GNB) degradation pathway, which is important for host intestinal colonization by bifidobacteria. The sequence is that of 1,3-beta-galactosyl-N-acetylhexosamine phosphorylase (lnpA) from Bifidobacterium longum subsp. longum (strain ATCC 15707 / DSM 20219 / JCM 1217 / NCTC 11818 / E194b).